The sequence spans 329 residues: Peroxidase 5 (329 aa).

The first 26 residues, 1-26, serve as a signal peptide directing secretion; sequence MSSKRVTWLSLTWVLVFLCLSVELEA. Gln-27 carries the post-translational modification Pyrrolidone carboxylic acid. 4 cysteine pairs are disulfide-bonded: Cys-37/Cys-117, Cys-70/Cys-75, Cys-123/Cys-324, and Cys-202/Cys-234. The active-site Proton acceptor is His-68. Ca(2+) contacts are provided by Asp-69, Val-72, Gly-74, Asp-76, and Ser-78. A substrate-binding site is contributed by Pro-165. His-195 serves as a coordination point for heme b. Residue Thr-196 participates in Ca(2+) binding. A glycan (N-linked (GlcNAc...) asparagine) is linked at Asn-213. Residues Ser-251 and Asp-256 each contribute to the Ca(2+) site.

This sequence belongs to the peroxidase family. Classical plant (class III) peroxidase subfamily. Heme b serves as cofactor. The cofactor is Ca(2+).

Its subcellular location is the secreted. The catalysed reaction is 2 a phenolic donor + H2O2 = 2 a phenolic radical donor + 2 H2O. Functionally, removal of H(2)O(2), oxidation of toxic reductants, biosynthesis and degradation of lignin, suberization, auxin catabolism, response to environmental stresses such as wounding, pathogen attack and oxidative stress. These functions might be dependent on each isozyme/isoform in each plant tissue. In Vitis vinifera (Grape), this protein is Peroxidase 5.